A 262-amino-acid chain; its full sequence is Type III pantothenate kinase (262 aa).

10 to 17 lines the ATP pocket; the sequence is DIGNTTTV. 110–113 contacts substrate; that stretch reads GADR. D112 serves as the catalytic Proton acceptor. K(+) is bound at residue D134. Residue T137 participates in ATP binding. Position 189 (T189) interacts with substrate.

The protein belongs to the type III pantothenate kinase family. In terms of assembly, homodimer. NH4(+) is required as a cofactor. The cofactor is K(+).

It localises to the cytoplasm. It catalyses the reaction (R)-pantothenate + ATP = (R)-4'-phosphopantothenate + ADP + H(+). It participates in cofactor biosynthesis; coenzyme A biosynthesis; CoA from (R)-pantothenate: step 1/5. Its function is as follows. Catalyzes the phosphorylation of pantothenate (Pan), the first step in CoA biosynthesis. The sequence is that of Type III pantothenate kinase from Deinococcus radiodurans (strain ATCC 13939 / DSM 20539 / JCM 16871 / CCUG 27074 / LMG 4051 / NBRC 15346 / NCIMB 9279 / VKM B-1422 / R1).